Here is a 187-residue protein sequence, read N- to C-terminus: V-type ATP synthase subunit E (187 aa).

It belongs to the V-ATPase E subunit family.

Functionally, produces ATP from ADP in the presence of a proton gradient across the membrane. In Clostridioides difficile (strain 630) (Peptoclostridium difficile), this protein is V-type ATP synthase subunit E.